The following is a 209-amino-acid chain: Small ribosomal subunit protein uS4 (209 aa).

One can recognise an S4 RNA-binding domain in the interval Ser99–Lys159.

The protein belongs to the universal ribosomal protein uS4 family. In terms of assembly, part of the 30S ribosomal subunit. Contacts protein S5. The interaction surface between S4 and S5 is involved in control of translational fidelity.

Its function is as follows. One of the primary rRNA binding proteins, it binds directly to 16S rRNA where it nucleates assembly of the body of the 30S subunit. In terms of biological role, with S5 and S12 plays an important role in translational accuracy. The sequence is that of Small ribosomal subunit protein uS4 from Thiobacillus denitrificans (strain ATCC 25259 / T1).